We begin with the raw amino-acid sequence, 615 residues long: MAERAPEPGAEAEAGAGGEAAAEEGAAGRKARGRPRLTESDRARRRLESRKKYDVRRVYLGEAHGPWVDLRRRSGWSDAKLAAYLISLERGQRSGRHGKPWEQVPKKPKRKKRRRRNVNCLKNVVIWYEDHKHRCPYEPHLAELDPTFGLYTTAVWQCEAGHRYFQDLHSPLKPLSDSEPDSDKVGSGLVAGSSDSSSSGSSSDSEEPPETQPAKASAAAAALTPASPTGSSGLITQEGVHIPFDVHHVESLAEQGTPLCQNPAGSGPEALETVVCVPVPMQVGTGPGTLFENMPQEALGEVVASCPVSGMVPGSQVIIIAGPGYDALTAEGIRLNVAAGGGTPSSSLGEEVPCAMMEGVAAYTQTEPEGTQHSTMDTTSIASIETKKEKEDLYMLKEEKEDSVAPELAELAATVPENAEAEAEVDGEELDSSEMSAIIYEIPKEPEKRRRSKRSRVMDADGLLEMFHCPYEGCSQVYVALSSFQNHVNLVHRKGKTKVCPHPGCGKKFYLSNHLRRHMIIHSGVREFTCETCGKSFKRKNHLEVHRRTHTGETPLQCEICGYQCRQRASLNWHMKKHTAEVQYNFTCDRCGKRFEKLDSVKFHTLKSHPDHKPT.

Disordered regions lie at residues 1–46 (MAER…ARRR), 93–115 (RSGRHGKPWEQVPKKPKRKKRRR), and 174–235 (PLSD…SGLI). Positions 7–25 (EPGAEAEAGAGGEAAAEEG) are enriched in low complexity. Positions 106-115 (KKPKRKKRRR) are enriched in basic residues. Low complexity-rich tracts occupy residues 192-203 (GSSDSSSSGSSS) and 212-232 (QPAKASAAAAALTPASPTGSS). C2H2-type zinc fingers lie at residues 467–492 (FHCPYEGCSQVYVALSSFQNHVNLVH), 498–522 (KVCPHPGCGKKFYLSNHLRRHMIIH), 528–550 (FTCETCGKSFKRKNHLEVHRRTH), 556–578 (LQCEICGYQCRQRASLNWHMKKH), and 586–609 (FTCDRCGKRFEKLDSVKFHTLKSH).

The protein belongs to the krueppel C2H2-type zinc-finger protein family. Interacts with NR5A1. In terms of tissue distribution, highly expressed in testis and spleen. Moderately expressed in lung, adrenal gland, uterus, and ovary. Very low expression in pancreas, heart, skeletal muscle, adipose tissue, kidney, and liver.

It is found in the nucleus. In terms of biological role, transcriptional repressor. May repress NR5A1, PPARG, NR1H3, NR4A2, ESR1 and NR3C1 transcriptional activity. The sequence is that of Zinc finger protein 653 (Znf653) from Mus musculus (Mouse).